Here is a 425-residue protein sequence, read N- to C-terminus: Tyrosine--tRNA ligase (425 aa).

Residue Tyr37 coordinates L-tyrosine. A 'HIGH' region motif is present at residues 42–51; sequence PTADSLHLGH. L-tyrosine contacts are provided by Tyr175 and Gln179. The short motif at 235-239 is the 'KMSKS' region element; it reads KFGKT. Lys238 contacts ATP. In terms of domain architecture, S4 RNA-binding spans 357–415; it reads QDLQQALVNAELAPSRGQARKLIEAKSVSINGSLQTDAEYTFGEDDRLFGQYTLLRRGK.

The protein belongs to the class-I aminoacyl-tRNA synthetase family. TyrS type 1 subfamily. Homodimer.

It localises to the cytoplasm. The enzyme catalyses tRNA(Tyr) + L-tyrosine + ATP = L-tyrosyl-tRNA(Tyr) + AMP + diphosphate + H(+). Functionally, catalyzes the attachment of tyrosine to tRNA(Tyr) in a two-step reaction: tyrosine is first activated by ATP to form Tyr-AMP and then transferred to the acceptor end of tRNA(Tyr). This chain is Tyrosine--tRNA ligase, found in Erwinia tasmaniensis (strain DSM 17950 / CFBP 7177 / CIP 109463 / NCPPB 4357 / Et1/99).